The sequence spans 25 residues: Omega conotoxin-CVIF (25 aa).

Cystine bridges form between Cys-1-Cys-16, Cys-8-Cys-20, and Cys-15-Cys-25. Cysteine amide is present on Cys-25.

This sequence belongs to the conotoxin O1 superfamily. In terms of tissue distribution, expressed by the venom duct.

The protein localises to the secreted. Functionally, omega-conotoxins act at presynaptic membranes, they bind and block voltage-gated calcium channels. This toxin blocks N-type calcium channels (Cav2.2/CACNA1B). It shows a higher potency when Cav2.2/CACNA1B is only expressed with the ancillary subunit CACNB3 (IC(50)=0.1 nM) than on Cav2.2/CACNA1B expressed with the ancillary subunits CACNA2D1 and CACNB3 (IC(50)=19.9 nM). The Cav2.2/CACNA1B block by this toxin is voltage-independent, whereas the recovery from toxin block is voltage-dependent. There is a low recovery at physiological membrane potential and a high recovery with hyperpolarized potential. This indicates that the toxin has a higher affinity for Cav2.2/CACNA1B in the inactivated state. It is noteworthy that ancillary subunits beta modulate recovery from this toxin block. Cav2.2/CACNA1B expressed with the ancillary subunit CACNB2a (isoform 2a) almost recover completely from this toxin block, whereas an expression with CACNB3 exhibits relatively weak recovery. Inhibition by this toxin of excitatory synaptic transmission is reversible. In vivo, when tested on rat model of persistent pain, this toxin blocks chronic pain behavior. In Conus catus (Cat cone), this protein is Omega conotoxin-CVIF.